The primary structure comprises 623 residues: MAAAGAGPGPGVSAGPGPGAAASATTAEDRETEPVAAGAGEGPSAAPGAEPSSGEAESGDANLVDVSGLETESSNGKDTLEGTGDTSEVMDTQAGSVDEENGRQLGEVELQCGICTKWFTADTFGIDTSSCLPFMTNYSFHCNVCHHSGNTYFLRKQANLKEMCLSALANLTWQSRTQDEHPKTMFSKDKDIIPFIDKYWECMTTRQRPGKMTWPNNIVKTMSKERDVFLVKEHPDPGSKDPEEDYPKFGLLDQDLSNIGPAYDNQKQSSAVSASGNLNGGIAAGSSGKGRGAKRKQQDGGTTGTTKKARSDPLFSAQRLPPHGYPLEHPFNKDGYRYILAEPDPHAPDPEKLELDCWAGKPIPGDLYRACLYERVLLALHDRAPQLKISDDRLTVVGEKGYSMVRASHGVRKGAWYFEITVDEMPPDTAARLGWSQPLGNLQAPLGYDKFSYSWRSKKGTKFHQSIGKHYSSGYGQGDVLGFYINLPEDTETAKSLPDTYKDKALIKFKSYLYFEEKDFVDKAEKSLKQTPHSEIIFYKNGVNQGVAYRDIFEGVYFPAISLYKSCTVSINFGPSFKYPPKDLTYHPMSDMGWGAVVEHTLADVLYHVETEVDGRRSPPWEP.

Gly residues predominate over residues 1–18 (MAAAGAGPGPGVSAGPGP). The PHD-type; atypical zinc finger occupies 1–62 (MAAAGAGPGP…SGEAESGDAN (62 aa)). The segment at 1–99 (MAAAGAGPGP…MDTQAGSVDE (99 aa)) is disordered. Residues 36–56 (AAGAGEGPSAAPGAEPSSGEA) are compositionally biased toward low complexity. A DNA-binding region spans residues 63 to 172 (LVDVSGLETE…MCLSALANLT (110 aa)). Residues 84–95 (GDTSEVMDTQAG) are compositionally biased toward polar residues. Serine 96 is modified (phosphoserine). A C4-type zinc finger spans residues 112 to 145 (CGICTKWFTADTFGIDTSSCLPFMTNYSFHCNVC). Basic and acidic residues predominate over residues 230 to 247 (LVKEHPDPGSKDPEEDYP). The segment at 230 to 326 (LVKEHPDPGS…AQRLPPHGYP (97 aa)) is disordered. The segment covering 265-277 (NQKQSSAVSASGN) has biased composition (polar residues). Residues 278–290 (LNGGIAAGSSGKG) show a composition bias toward gly residues. Arginine 291 carries the post-translational modification Asymmetric dimethylarginine; by PRMT1 and PRMT5. Residue serine 311 is modified to Phosphoserine. Residues 311 to 623 (SDPLFSAQRL…DGRRSPPWEP (313 aa)) are interaction with RBBP5. One can recognise a B30.2/SPRY domain in the interval 355-578 (LDCWAGKPIP…VSINFGPSFK (224 aa)).

Interacts with HCFC1. Core component of several methyltransferase-containing complexes including MLL1/MLL, MLL2/3 (also named ASCOM complex) and MLL4/WBP7. Each complex is at least composed of ASH2L, RBBP5, WDR5, DPY30, one or more specific histone methyltransferases (KMT2A/MLL1, KMT2D/MLL2, KMT2C/MLL3 and KMT2B/MLL4), and the facultative components PAGR1, BACC1, CHD8, E2F6, HCFC1, HCFC2, HSP70, INO80C, KDM6A, KANSL1, LAS1L, MAX, MCRS1, MEN1, MGA, KAT8/MOF, NCOA6, PAXIP1/PTIP, PELP1, PHF20, PRP31, RING2, RUVB1/TIP49A, RUVB2/TIP49B, SENP3, TAF1, TAF4, TAF6, TAF7, TAF9, TEX10 and alpha- and beta-tubulin. Component of the SET1 complex, at least composed of the catalytic subunit (SETD1A or SETD1B), WDR5, WDR82, RBBP5, ASH2L/ASH2, CXXC1/CFP1, HCFC1 and DPY30. Found in a complex with RBBP5, ASH2L, DPY30, KMT2A, KMT2D and WDR5. Component of a histone methylation complex composed of at least ZNF335, RBBP5, ASH2L and WDR5; the complex may have histone H3-specific methyltransferase activity, however does not have specificity for 'Lys-4' of histone H3. Within the complex, interacts with ZNF335. Interacts with RBBP5. Components of this complex may associate with components of a nuclear receptor-mediated transcription complex to form a complex at least composed of ZNF335, HCFC1, CCAR2, EMSY, MKI67, RBBP5, ASH2L and WDR5. Within this complex also interacts with CCAR2 and EMSY. Interacts with DPY30. Interacts with SETD1A and SETD1B. Both monomethylated and dimethylated on arginine residues in the C-terminus. Arg-291 is the major site. Methylation is not required for nuclear localization, nor for MLL complex integrity or maintenance of global histone H3K4me3 levels. In terms of tissue distribution, ubiquitously expressed, with abundant expression in the heart, skeletal muscle and kidney. Low expression is seen in spleen, lung and testis.

The protein localises to the nucleus. Functionally, transcriptional regulator. Component or associated component of some histone methyltransferase complexes which regulates transcription through recruitment of those complexes to gene promoters. Component of the Set1/Ash2 histone methyltransferase (HMT) complex, a complex that specifically methylates 'Lys-4' of histone H3, but not if the neighboring 'Lys-9' residue is already methylated. As part of the MLL1/MLL complex it is involved in methylation and dimethylation at 'Lys-4' of histone H3. May play a role in hematopoiesis. In association with RBBP5 and WDR5, stimulates the histone methyltransferase activities of KMT2A, KMT2B, KMT2C, KMT2D, SETD1A and SETD1B. In Mus musculus (Mouse), this protein is Set1/Ash2 histone methyltransferase complex subunit ASH2 (Ash2l).